The chain runs to 255 residues: Tryptophan synthase alpha chain (255 aa).

Active-site proton acceptor residues include Glu-49 and Asp-60.

The protein belongs to the TrpA family. As to quaternary structure, tetramer of two alpha and two beta chains.

The enzyme catalyses (1S,2R)-1-C-(indol-3-yl)glycerol 3-phosphate + L-serine = D-glyceraldehyde 3-phosphate + L-tryptophan + H2O. Its pathway is amino-acid biosynthesis; L-tryptophan biosynthesis; L-tryptophan from chorismate: step 5/5. In terms of biological role, the alpha subunit is responsible for the aldol cleavage of indoleglycerol phosphate to indole and glyceraldehyde 3-phosphate. The chain is Tryptophan synthase alpha chain from Desulfovibrio desulfuricans (strain ATCC 27774 / DSM 6949 / MB).